The following is a 278-amino-acid chain: Soluble NSF attachment protein homolog FPV011 (278 aa).

The protein belongs to the SNAP family.

The protein is Soluble NSF attachment protein homolog FPV011 of Fowlpox virus (strain NVSL) (FPV).